We begin with the raw amino-acid sequence, 373 residues long: UDP-N-acetylglucosamine--N-acetylmuramyl-(pentapeptide) pyrophosphoryl-undecaprenol N-acetylglucosamine transferase (373 aa).

UDP-N-acetyl-alpha-D-glucosamine contacts are provided by residues 15-17 (TGG), N126, R170, S198, and Q300.

The protein belongs to the glycosyltransferase 28 family. MurG subfamily.

The protein localises to the cell inner membrane. The enzyme catalyses di-trans,octa-cis-undecaprenyl diphospho-N-acetyl-alpha-D-muramoyl-L-alanyl-D-glutamyl-meso-2,6-diaminopimeloyl-D-alanyl-D-alanine + UDP-N-acetyl-alpha-D-glucosamine = di-trans,octa-cis-undecaprenyl diphospho-[N-acetyl-alpha-D-glucosaminyl-(1-&gt;4)]-N-acetyl-alpha-D-muramoyl-L-alanyl-D-glutamyl-meso-2,6-diaminopimeloyl-D-alanyl-D-alanine + UDP + H(+). Its pathway is cell wall biogenesis; peptidoglycan biosynthesis. In terms of biological role, cell wall formation. Catalyzes the transfer of a GlcNAc subunit on undecaprenyl-pyrophosphoryl-MurNAc-pentapeptide (lipid intermediate I) to form undecaprenyl-pyrophosphoryl-MurNAc-(pentapeptide)GlcNAc (lipid intermediate II). In Methylobacterium nodulans (strain LMG 21967 / CNCM I-2342 / ORS 2060), this protein is UDP-N-acetylglucosamine--N-acetylmuramyl-(pentapeptide) pyrophosphoryl-undecaprenol N-acetylglucosamine transferase.